Consider the following 491-residue polypeptide: Cytochrome P450 2B3 (491 aa).

Cys-436 serves as a coordination point for heme.

The protein belongs to the cytochrome P450 family. Heme is required as a cofactor. In terms of tissue distribution, liver. Not found in the lung, kidney and prostate.

The protein resides in the endoplasmic reticulum membrane. It is found in the microsome membrane. The enzyme catalyses an organic molecule + reduced [NADPH--hemoprotein reductase] + O2 = an alcohol + oxidized [NADPH--hemoprotein reductase] + H2O + H(+). Functionally, cytochromes P450 are a group of heme-thiolate monooxygenases. In liver microsomes, this enzyme is involved in an NADPH-dependent electron transport pathway. It oxidizes a variety of structurally unrelated compounds, including steroids, fatty acids, and xenobiotics. The sequence is that of Cytochrome P450 2B3 (Cyp2b3) from Rattus norvegicus (Rat).